We begin with the raw amino-acid sequence, 500 residues long: Aspartyl/glutamyl-tRNA(Asn/Gln) amidotransferase subunit B (500 aa).

The protein belongs to the GatB/GatE family. GatB subfamily. Heterotrimer of A, B and C subunits.

The enzyme catalyses L-glutamyl-tRNA(Gln) + L-glutamine + ATP + H2O = L-glutaminyl-tRNA(Gln) + L-glutamate + ADP + phosphate + H(+). The catalysed reaction is L-aspartyl-tRNA(Asn) + L-glutamine + ATP + H2O = L-asparaginyl-tRNA(Asn) + L-glutamate + ADP + phosphate + 2 H(+). Its function is as follows. Allows the formation of correctly charged Asn-tRNA(Asn) or Gln-tRNA(Gln) through the transamidation of misacylated Asp-tRNA(Asn) or Glu-tRNA(Gln) in organisms which lack either or both of asparaginyl-tRNA or glutaminyl-tRNA synthetases. The reaction takes place in the presence of glutamine and ATP through an activated phospho-Asp-tRNA(Asn) or phospho-Glu-tRNA(Gln). The protein is Aspartyl/glutamyl-tRNA(Asn/Gln) amidotransferase subunit B of Brucella anthropi (strain ATCC 49188 / DSM 6882 / CCUG 24695 / JCM 21032 / LMG 3331 / NBRC 15819 / NCTC 12168 / Alc 37) (Ochrobactrum anthropi).